A 737-amino-acid chain; its full sequence is LIMR family protein R05D3.2 (737 aa).

Residues 280–293 (ADIEEENSEQSEDV) show a composition bias toward acidic residues. Positions 280–416 (ADIEEENSEQ…PKKPKNPNFD (137 aa)) are disordered. Residues 303–318 (ETIHQVDRSDTPHLED) show a composition bias toward basic and acidic residues.

This sequence belongs to the LIMR family.

In Caenorhabditis elegans, this protein is LIMR family protein R05D3.2.